The sequence spans 159 residues: Protein phosphatase 1 regulatory subunit 17 (159 aa).

2 disordered regions span residues 1–79 (MSTE…HIPP) and 98–127 (RIPKAKSGPALHNSDMEQKRPRRKDTPALH). 2 stretches are compositionally biased toward basic and acidic residues: residues 62–73 (SDQKKPRRKDTP) and 111–124 (SDMEQKRPRRKDTP). Phosphothreonine; by PKG/PRKG1 is present on residues Thr-72 and Thr-123.

In terms of processing, substrate for cGMP-dependent protein kinase. Phosphorylation of Thr-72 and Thr-123 is required for its phosphatase activity. Phosphorylated by PRKG1 isoform alpha. Expressed in Purkinje cells of the cerebellum, hippocampus, pons, medulla and eye.

Its function is as follows. Inhibits phosphatase activities of protein phosphatase 1 (PP1) and protein phosphatase 2A (PP2A) complexes. In Mus musculus (Mouse), this protein is Protein phosphatase 1 regulatory subunit 17 (Ppp1r17).